We begin with the raw amino-acid sequence, 330 residues long: Probable xanthine dehydrogenase subunit A (330 aa).

In terms of assembly, could be composed of four subunits: PucA, PucC, PucD and PucE.

It catalyses the reaction xanthine + NAD(+) + H2O = urate + NADH + H(+). The catalysed reaction is hypoxanthine + NAD(+) + H2O = xanthine + NADH + H(+). It functions in the pathway purine metabolism; hypoxanthine degradation; urate from hypoxanthine: step 1/2. It participates in purine metabolism; hypoxanthine degradation; urate from hypoxanthine: step 2/2. In terms of biological role, oxidizes hypoxanthine and xanthine to uric acid. PucA subunit could exert a molybdenum cofactor recruiting function. The sequence is that of Probable xanthine dehydrogenase subunit A (pucA) from Bacillus subtilis (strain 168).